The chain runs to 132 residues: Large-conductance mechanosensitive channel (132 aa).

Transmembrane regions (helical) follow at residues 10–30 and 76–96; these read FAVKGNVIDMAVGVVIGSAFG and GNFIQVTIDFLIIAFCIFLAI.

Belongs to the MscL family. Homopentamer.

It is found in the cell inner membrane. Channel that opens in response to stretch forces in the membrane lipid bilayer. May participate in the regulation of osmotic pressure changes within the cell. The protein is Large-conductance mechanosensitive channel of Campylobacter hominis (strain ATCC BAA-381 / DSM 21671 / CCUG 45161 / LMG 19568 / NCTC 13146 / CH001A).